A 190-amino-acid polypeptide reads, in one-letter code: Ribosome hibernation promotion factor (190 aa).

Residues 101 to 190 (RDRGDQEVFV…KYGLIQTSEQ (90 aa)) are required for ribosome-binding.

It belongs to the HPF/YfiA ribosome-associated protein family. Long HPF subfamily. Interacts with 100S ribosomes during exponential growth, as 100S ribosomes decrease (after 28 hours) also found associated with 30s and 50S subunits.

The protein resides in the cytoplasm. In terms of biological role, required and sufficient for dimerization of active 70S ribosomes into 100S ribosomes. 110S ribosomes are probably translationally inactive and may serve as a reservoir of easily reactivated ribosomes when necessary in the cell. Also reduces the translation efficiency of a small number of genes. Unlike E.coli, 100S ribosomes are present during exponential growth and decrease during stationary phase. This strain produces 30% fewer 100S ribosomes than strain N315 and RN4200 under the same growth conditions. This Staphylococcus aureus (strain USA300) protein is Ribosome hibernation promotion factor.